The sequence spans 430 residues: Glutamate-1-semialdehyde 2,1-aminomutase (430 aa).

K267 bears the N6-(pyridoxal phosphate)lysine mark.

It belongs to the class-III pyridoxal-phosphate-dependent aminotransferase family. HemL subfamily. As to quaternary structure, homodimer. Pyridoxal 5'-phosphate serves as cofactor.

The protein resides in the cytoplasm. It carries out the reaction (S)-4-amino-5-oxopentanoate = 5-aminolevulinate. It functions in the pathway porphyrin-containing compound metabolism; protoporphyrin-IX biosynthesis; 5-aminolevulinate from L-glutamyl-tRNA(Glu): step 2/2. The polypeptide is Glutamate-1-semialdehyde 2,1-aminomutase (Cytophaga hutchinsonii (strain ATCC 33406 / DSM 1761 / CIP 103989 / NBRC 15051 / NCIMB 9469 / D465)).